We begin with the raw amino-acid sequence, 471 residues long: MPAKGVIQEIIGVVIRAKFPEDEVPEIYNAIEIPLGNGDRLVCEVQQQLGNGVVKAVAMGSTDGLRRGLEVIDTGRPIAVPVGPATLGRVFNVLGDPIDGMGPIGPEVERRPIHRDPPSFEEQNTQAQIFETGIKVIDLIAPFTRGGKTAIFGGAGVGKTVVIQELIANIAKEQSGFSVFAGVGERSREGNDLIHEMKEARIDENTTVFDKTVMVFGQMNEPPGARLRVGLTALTMAEYFRDEGRDILLFIDNIFRFVQAGSEVSSLLGRMPSQVGYQPTLGTEMGELQERITSTKRGSITSMQAVYVPADDYTDPAPATVFSHLDATISLERSIAERAIFPAVDPLASTSRILDPNIVGEEHYRVAQEVKRVLQRYKDLKDIIAILGMEELSDEDKLTVQRARKIELFFSQPFTVAQQFTGRPGKYVPVKKTVESFARLLNGEGDHIPESFFYMQGDFDDVLAAYEASQK.

An ATP-binding site is contributed by 153 to 160 (GGAGVGKT).

It belongs to the ATPase alpha/beta chains family. F-type ATPases have 2 components, CF(1) - the catalytic core - and CF(0) - the membrane proton channel. CF(1) has five subunits: alpha(3), beta(3), gamma(1), delta(1), epsilon(1). CF(0) has four main subunits: a(1), b(1), b'(1) and c(9-12).

The protein resides in the cell membrane. It carries out the reaction ATP + H2O + 4 H(+)(in) = ADP + phosphate + 5 H(+)(out). Produces ATP from ADP in the presence of a proton gradient across the membrane. The catalytic sites are hosted primarily by the beta subunits. The chain is ATP synthase subunit beta from Chloroflexus aurantiacus (strain ATCC 29364 / DSM 637 / Y-400-fl).